Here is a 457-residue protein sequence, read N- to C-terminus: tRNA-2-methylthio-N(6)-dimethylallyladenosine synthase (457 aa).

Residues 3-120 (KKVYVKTFGC…LPQMIDARRE (118 aa)) enclose the MTTase N-terminal domain. [4Fe-4S] cluster contacts are provided by Cys-12, Cys-49, Cys-83, Cys-157, Cys-161, and Cys-164. The 235-residue stretch at 143–377 (RVEGPSAFVS…QATIEENVAR (235 aa)) folds into the Radical SAM core domain. Positions 380 to 447 (QSMVGKVERI…PHSLRGELVL (68 aa)) constitute a TRAM domain.

It belongs to the methylthiotransferase family. MiaB subfamily. In terms of assembly, monomer. [4Fe-4S] cluster is required as a cofactor.

It localises to the cytoplasm. It carries out the reaction N(6)-dimethylallyladenosine(37) in tRNA + (sulfur carrier)-SH + AH2 + 2 S-adenosyl-L-methionine = 2-methylsulfanyl-N(6)-dimethylallyladenosine(37) in tRNA + (sulfur carrier)-H + 5'-deoxyadenosine + L-methionine + A + S-adenosyl-L-homocysteine + 2 H(+). In terms of biological role, catalyzes the methylthiolation of N6-(dimethylallyl)adenosine (i(6)A), leading to the formation of 2-methylthio-N6-(dimethylallyl)adenosine (ms(2)i(6)A) at position 37 in tRNAs that read codons beginning with uridine. This Burkholderia lata (strain ATCC 17760 / DSM 23089 / LMG 22485 / NCIMB 9086 / R18194 / 383) protein is tRNA-2-methylthio-N(6)-dimethylallyladenosine synthase.